The sequence spans 854 residues: DNA gyrase subunit A (854 aa).

One can recognise a Topo IIA-type catalytic domain in the interval leucine 42–leucine 510. Tyrosine 129 (O-(5'-phospho-DNA)-tyrosine intermediate) is an active-site residue. Residues glutamine 537–glycine 543 carry the GyrA-box motif.

The protein belongs to the type II topoisomerase GyrA/ParC subunit family. As to quaternary structure, heterotetramer, composed of two GyrA and two GyrB chains. In the heterotetramer, GyrA contains the active site tyrosine that forms a transient covalent intermediate with DNA, while GyrB binds cofactors and catalyzes ATP hydrolysis.

It localises to the cytoplasm. The enzyme catalyses ATP-dependent breakage, passage and rejoining of double-stranded DNA.. DNA supercoiling is inhibited by the coumarin antibiotic novobiocin. Also inhibited by the fluoroquinolones ciprofloxacin and moxifloxacin. In terms of biological role, a type II topoisomerase that negatively supercoils closed circular double-stranded (ds) DNA in an ATP-dependent manner to modulate DNA topology and maintain chromosomes in an underwound state; also catalyzes the interconversion of other topological isomers of double-stranded DNA rings, including catenanes. At comparable concentrations has a stronger decatenation activity than E.coli, which is inhibited by ciprofloxacin and novobiocin. Cleaves dsDNA at the sequence 5'-AT/GGCC-3', leaving a 4 base overhang. Relaxes negatively supercoiled DNA in an ATP-independent manner. Negative supercoiling favors strand separation, and DNA replication, transcription, recombination and repair, all of which involve strand separation. Type II topoisomerases break and join 2 DNA strands simultaneously in an ATP-dependent manner. The polypeptide is DNA gyrase subunit A (Mycolicibacterium smegmatis (Mycobacterium smegmatis)).